A 200-amino-acid chain; its full sequence is Recombination protein RecR (200 aa).

Residues 58-75 form a C4-type zinc finger; it reads CPLCFTLKESKEADCHFC. In terms of domain architecture, Toprim spans 82–177; the sequence is QSLCIVASPK…NISRLALGLP (96 aa).

It belongs to the RecR family.

May play a role in DNA repair. It seems to be involved in an RecBC-independent recombinational process of DNA repair. It may act with RecF and RecO. In Chlamydia pneumoniae (Chlamydophila pneumoniae), this protein is Recombination protein RecR.